The sequence spans 594 residues: DNA mismatch repair protein MutL (594 aa).

It belongs to the DNA mismatch repair MutL/HexB family.

Functionally, this protein is involved in the repair of mismatches in DNA. It is required for dam-dependent methyl-directed DNA mismatch repair. May act as a 'molecular matchmaker', a protein that promotes the formation of a stable complex between two or more DNA-binding proteins in an ATP-dependent manner without itself being part of a final effector complex. The chain is DNA mismatch repair protein MutL from Tolumonas auensis (strain DSM 9187 / NBRC 110442 / TA 4).